A 556-amino-acid polypeptide reads, in one-letter code: Formate--tetrahydrofolate ligase 1 (556 aa).

ATP is bound at residue 65–72 (TPAGEGKS).

It belongs to the formate--tetrahydrofolate ligase family.

It catalyses the reaction (6S)-5,6,7,8-tetrahydrofolate + formate + ATP = (6R)-10-formyltetrahydrofolate + ADP + phosphate. It functions in the pathway one-carbon metabolism; tetrahydrofolate interconversion. The protein is Formate--tetrahydrofolate ligase 1 of Streptococcus pyogenes serotype M4 (strain MGAS10750).